The primary structure comprises 390 residues: MYTSLLVRYGEISLKGNNRPYFEDKLLANMRRALAGLPPRRMRKTFGRVFVELHDDLEAVARRLQRVFGIVSMSPVATAPLELEAIKKAALAVLKDSPGSTFKVQAQRPNKRFPLTSPEVNQELGAYLLTHSQGQRVDVHHPDRVIHVEIRDEGAYIYSRIIPGPGGLPVGVTGRGLLLISGGIDSPVAGYMGMKRGLELTALHFHSFPFTSERSKEKVIDLCRVLAGYSGPLRLVVAPFTNIQKAIRQNCPQEFYVTIMRRMMFRIARAVAAKEEAPAILTGESLGQVASQTLQSMAVINKVVDLPVLRPLVAWDKSEIIEVARRIGTYDISIRPYEDCCTLFVPKHPATKPPLARVEAAEKNLAVVELVAECLENLEILTVEPEADVV.

The THUMP domain occupies 58–161 (EAVARRLQRV…DEGAYIYSRI (104 aa)). ATP contacts are provided by residues 179-180 (LI), 204-205 (HF), arginine 261, glycine 283, and glutamine 292.

Belongs to the ThiI family.

The protein resides in the cytoplasm. The catalysed reaction is [ThiI sulfur-carrier protein]-S-sulfanyl-L-cysteine + a uridine in tRNA + 2 reduced [2Fe-2S]-[ferredoxin] + ATP + H(+) = [ThiI sulfur-carrier protein]-L-cysteine + a 4-thiouridine in tRNA + 2 oxidized [2Fe-2S]-[ferredoxin] + AMP + diphosphate. It carries out the reaction [ThiS sulfur-carrier protein]-C-terminal Gly-Gly-AMP + S-sulfanyl-L-cysteinyl-[cysteine desulfurase] + AH2 = [ThiS sulfur-carrier protein]-C-terminal-Gly-aminoethanethioate + L-cysteinyl-[cysteine desulfurase] + A + AMP + 2 H(+). Its pathway is cofactor biosynthesis; thiamine diphosphate biosynthesis. In terms of biological role, catalyzes the ATP-dependent transfer of a sulfur to tRNA to produce 4-thiouridine in position 8 of tRNAs, which functions as a near-UV photosensor. Also catalyzes the transfer of sulfur to the sulfur carrier protein ThiS, forming ThiS-thiocarboxylate. This is a step in the synthesis of thiazole, in the thiamine biosynthesis pathway. The sulfur is donated as persulfide by IscS. This chain is Probable tRNA sulfurtransferase, found in Moorella thermoacetica (strain ATCC 39073 / JCM 9320).